Consider the following 270-residue polypeptide: Putative pyruvate, phosphate dikinase regulatory protein 2 (270 aa).

Residue 151-158 (GVSRTSKT) coordinates ADP.

The protein belongs to the pyruvate, phosphate/water dikinase regulatory protein family. PDRP subfamily.

It catalyses the reaction N(tele)-phospho-L-histidyl/L-threonyl-[pyruvate, phosphate dikinase] + ADP = N(tele)-phospho-L-histidyl/O-phospho-L-threonyl-[pyruvate, phosphate dikinase] + AMP + H(+). The catalysed reaction is N(tele)-phospho-L-histidyl/O-phospho-L-threonyl-[pyruvate, phosphate dikinase] + phosphate + H(+) = N(tele)-phospho-L-histidyl/L-threonyl-[pyruvate, phosphate dikinase] + diphosphate. Bifunctional serine/threonine kinase and phosphorylase involved in the regulation of the pyruvate, phosphate dikinase (PPDK) by catalyzing its phosphorylation/dephosphorylation. The sequence is that of Putative pyruvate, phosphate dikinase regulatory protein 2 from Listeria monocytogenes serotype 4b (strain F2365).